Reading from the N-terminus, the 99-residue chain is Small integral membrane protein 9 (99 aa).

The first 26 residues, 1–26 (MEPQKLLIIGFLLCSLTCLLLETVAS), serve as a signal peptide directing secretion. Over 27 to 73 (SPLPLSALGIQEKTGSKPRSGGNHRSWLNNFRDYLWQLIKSALPPAA) the chain is Extracellular. Residues 74–94 (IVAFLLTSALMGILCCFTILV) traverse the membrane as a helical segment. The Cytoplasmic segment spans residues 95 to 99 (VDPVH).

It localises to the cell membrane. This chain is Small integral membrane protein 9 (SMIM9), found in Homo sapiens (Human).